Here is a 92-residue protein sequence, read N- to C-terminus: Small ribosomal subunit protein uS19c (92 aa).

Belongs to the universal ribosomal protein uS19 family.

It localises to the plastid. The protein resides in the chloroplast. Its function is as follows. Protein S19 forms a complex with S13 that binds strongly to the 16S ribosomal RNA. This chain is Small ribosomal subunit protein uS19c, found in Adiantum capillus-veneris (Maidenhair fern).